Reading from the N-terminus, the 478-residue chain is BUB3-interacting and GLEBS motif-containing protein ZNF207 (478 aa).

Residues 1 to 92 are microtubule-binding region; the sequence is MGRKKKKQLK…EGIPEKDMDE (92 aa). 2 C2H2-type zinc fingers span residues 11 to 34 and 35 to 58; these read PWCW…KAKH and FKCH…MQVH. Positions 99-111 are enriched in basic and acidic residues; it reads QKTQESQKKKQQD. 4 disordered regions span residues 99–157, 238–276, 300–362, and 384–478; these read QKTQ…PGMP, APTA…SNSE, VGTD…ATSK, and RNLP…GGRY. A compositionally biased stretch (acidic residues) spans 112–121; sequence DSDEYDDDDS. Residues 127–136 show a composition bias toward polar residues; the sequence is FQPQPVQPQQ. Pro residues predominate over residues 142 to 157; that stretch reads MAQPGLPPVPGAPGMP. Low complexity-rich tracts occupy residues 267-276, 310-362, and 433-446; these read SSSTASSNSE, TPAT…ATSK, and QGMP…MPPY. Residues 359–391 form a GLEBS region; the sequence is ATSKLIHPDEDISLEERRAQLPKYQRNLPRPGQ. The span at 447–467 shows a compositional bias: pro residues; it reads GQGPPMVPPYQGGPPRPPMGM.

Interacts (via GLEBS region) with BUB3. In terms of tissue distribution, ubiquitous.

The protein resides in the nucleus. The protein localises to the chromosome. It is found in the centromere. Its subcellular location is the kinetochore. It localises to the cytoplasm. The protein resides in the cytoskeleton. The protein localises to the spindle. Kinetochore- and microtubule-binding protein that plays a key role in spindle assembly. ZNF207/BuGZ is mainly composed of disordered low-complexity regions and undergoes phase transition or coacervation to form temperature-dependent liquid droplets. Coacervation promotes microtubule bundling and concentrates tubulin, promoting microtubule polymerization and assembly of spindle and spindle matrix by concentrating its building blocks. Also acts as a regulator of mitotic chromosome alignment by mediating the stability and kinetochore loading of BUB3. Mechanisms by which BUB3 is protected are unclear: according to a first report, ZNF207/BuGZ may act by blocking ubiquitination and proteasomal degradation of BUB3. According to another report, the stabilization is independent of the proteasome. The polypeptide is BUB3-interacting and GLEBS motif-containing protein ZNF207 (Homo sapiens (Human)).